Reading from the N-terminus, the 546-residue chain is MLSILLENPLLVLFLVAAIGYPLGRIKIRGSSLGVAAVLFVGLAMGSLHPELKLPEIVYVLGLALFVYTIGLSSGPAFVASLKREGIRNNALIIGMLLVAAGLVVGAQRLLGFKGTVTAGLFAGSLTNTPALAGALETIKHIASPELRELLLAEPVVGYSVAYPMGVMGVVLAISLVQKLWNVDYGEEGKRLRLAGTASEALRSMTVRIAWPGAGRHTVAELARHEKWDVIFGRIRRGDSYLLTGPQVRFQPGDLVTAVGTETELRRVAAFLGEVSEEEITVDRSEYDYRRIFVSNPRVAGRQLGELNLFENYGATVTRVRRGDDDFLPHDDMVLELGDRVRVVTHRDHMAEVTAFFGDSYRAVSEVDILTFSLGLALGLLLGIIPIPLPGGITLKLGFAGGPLIVALILGTIGRSGSMVWSLPYSANMTLRQIGLVLFLAGVGTRAGYGFVTTLAKGGGLAIFAAGAVVTCLTALATLWIGHKLMKIPMSILIGMVAGLQTQPAVLGYALEQTGNDLPNIGYASVYPVATISKILIVQILLTMLM.

Transmembrane regions (helical) follow at residues 4 to 23, 30 to 47, 57 to 79, 91 to 113, and 155 to 177; these read ILLENPLLVLFLVAAIGYPL, GSSLGVAAVLFVGLAMGS, IVYVLGLALFVYTIGLSSGPAFV, ALIIGMLLVAAGLVVGAQRLLGF, and PVVGYSVAYPMGVMGVVLAISLV. 2 consecutive RCK C-terminal domains span residues 189 to 274 and 275 to 359; these read GKRL…FLGE and VSEE…FFGD. A run of 6 helical transmembrane segments spans residues 372-394, 399-421, 434-456, 460-482, 489-511, and 521-543; these read FSLGLALGLLLGIIPIPLPGGIT, FAGGPLIVALILGTIGRSGSMVW, IGLVLFLAGVGTRAGYGFVTTLA, GLAIFAAGAVVTCLTALATLWIG, PMSILIGMVAGLQTQPAVLGYAL, and IGYASVYPVATISKILIVQILLT.

Belongs to the AAE transporter (TC 2.A.81) family.

The protein localises to the cell membrane. This is an uncharacterized protein from Geobacter sulfurreducens (strain ATCC 51573 / DSM 12127 / PCA).